Consider the following 90-residue polypeptide: Cell division topological specificity factor (90 aa).

This sequence belongs to the MinE family.

Its function is as follows. Prevents the cell division inhibition by proteins MinC and MinD at internal division sites while permitting inhibition at polar sites. This ensures cell division at the proper site by restricting the formation of a division septum at the midpoint of the long axis of the cell. This is Cell division topological specificity factor from Clostridium perfringens (strain ATCC 13124 / DSM 756 / JCM 1290 / NCIMB 6125 / NCTC 8237 / Type A).